The primary structure comprises 220 residues: Peptide methionine sulfoxide reductase MsrA (220 aa).

Cys-54 is an active-site residue.

The protein belongs to the MsrA Met sulfoxide reductase family.

It carries out the reaction L-methionyl-[protein] + [thioredoxin]-disulfide + H2O = L-methionyl-(S)-S-oxide-[protein] + [thioredoxin]-dithiol. It catalyses the reaction [thioredoxin]-disulfide + L-methionine + H2O = L-methionine (S)-S-oxide + [thioredoxin]-dithiol. Has an important function as a repair enzyme for proteins that have been inactivated by oxidation. Catalyzes the reversible oxidation-reduction of methionine sulfoxide in proteins to methionine. The chain is Peptide methionine sulfoxide reductase MsrA from Salinispora arenicola (strain CNS-205).